A 79-amino-acid chain; its full sequence is Cyclin-dependent kinases regulatory subunit 2 (79 aa).

Residue Lys4 is modified to N6-acetyllysine.

This sequence belongs to the CKS family. As to quaternary structure, forms a homohexamer that can probably bind six kinase subunits.

In terms of biological role, binds to the catalytic subunit of the cyclin dependent kinases and is essential for their biological function. This Bos taurus (Bovine) protein is Cyclin-dependent kinases regulatory subunit 2 (CKS2).